Here is a 471-residue protein sequence, read N- to C-terminus: Putative multidrug resistance protein MdtD (471 aa).

The Periplasmic segment spans residues 1 to 11; it reads MTDLPDSTRWQ. The helical transmembrane segment at 12–32 threads the bilayer; the sequence is LWIVAFGFFMQSLDTTIVNTA. Topologically, residues 33-48 are cytoplasmic; sequence LPSMAQSLGESPLHMH. A helical transmembrane segment spans residues 49-69; the sequence is MVIVSYVLTVAVMLPASGWLA. Residues 70 to 76 are Periplasmic-facing; that stretch reads DKVGVRN. The helical transmembrane segment at 77–97 threads the bilayer; it reads IFFTAIVLFTLGSLFCALSGT. Over 98 to 101 the chain is Cytoplasmic; that stretch reads LNEL. A helical membrane pass occupies residues 102–124; that stretch reads LLARALQGVGGAMMVPVGRLTVM. Over 125–137 the chain is Periplasmic; that stretch reads KIVPREQYMAAMT. A helical membrane pass occupies residues 138–158; it reads FVTLPGQVGPLLGPALGGLLV. At 159–164 the chain is on the cytoplasmic side; that stretch reads EYASWH. The chain crosses the membrane as a helical span at residues 165 to 185; that stretch reads WIFLINIPVGIIGAIATLMLM. Topologically, residues 186-196 are periplasmic; that stretch reads PNYTMQTRRFD. A helical transmembrane segment spans residues 197-217; it reads LSGFLLLAVGMAVLTLALDGS. Residues 218–224 are Cytoplasmic-facing; sequence KGTGLSP. Residues 225–245 traverse the membrane as a helical segment; that stretch reads LAITGLVAVGVVALVLYLLHA. Residues 246–262 lie on the Periplasmic side of the membrane; it reads RNNHRALFSLKLFRTRT. The helical transmembrane segment at 263–283 threads the bilayer; it reads FSLGLAGSFAGRIGSGMLPFM. Residues 284 to 285 are Cytoplasmic-facing; it reads TP. A helical membrane pass occupies residues 286–306; it reads VFLQIGLGFSPFHAGLMMIPM. Topologically, residues 307–341 are periplasmic; sequence VLGSMGMKRIVVQVVNRFGYRRVLVATTLGLSLVT. The chain crosses the membrane as a helical span at residues 342–362; that stretch reads LLFMTTALLGWYYVLPFVLFL. Topologically, residues 363-395 are cytoplasmic; that stretch reads QGMVNSTRFSSMNTLTLKDLPDNLASSGNSLLS. A helical membrane pass occupies residues 396 to 416; the sequence is MIMQLSMSIGVTIAGLLLGLF. Over 417–430 the chain is Periplasmic; the sequence is GSQHVSVDSGTTQT. A helical transmembrane segment spans residues 431–451; the sequence is VFMYTWLSMAFIIALPAFIFA. Over 452–471 the chain is Cytoplasmic; sequence RVPNDTHQNVAISRRKRSAQ.

It belongs to the major facilitator superfamily. TCR/Tet family.

The protein resides in the cell inner membrane. This Escherichia coli O127:H6 (strain E2348/69 / EPEC) protein is Putative multidrug resistance protein MdtD.